The chain runs to 1358 residues: DNA-directed RNA polymerase subunit beta (1358 aa).

It belongs to the RNA polymerase beta chain family. In terms of assembly, the RNAP catalytic core consists of 2 alpha, 1 beta, 1 beta' and 1 omega subunit. When a sigma factor is associated with the core the holoenzyme is formed, which can initiate transcription.

The catalysed reaction is RNA(n) + a ribonucleoside 5'-triphosphate = RNA(n+1) + diphosphate. DNA-dependent RNA polymerase catalyzes the transcription of DNA into RNA using the four ribonucleoside triphosphates as substrates. The chain is DNA-directed RNA polymerase subunit beta from Francisella philomiragia subsp. philomiragia (strain ATCC 25017 / CCUG 19701 / FSC 153 / O#319-036).